The following is a 1377-amino-acid chain: Pleckstrin homology-like domain family B member 1 (1377 aa).

Position 51 is a phosphoserine (S51). The 62-residue stretch at 64–125 folds into the FHA domain; it reads TVIGSAARDI…LTQGCMLCLG (62 aa). An Asymmetric dimethylarginine modification is found at R131. A disordered region spans residues 150 to 187; sequence RAPGPPYSPVPAESESLVNGNHTPQTATRGPSACASHS. The span at 165–178 shows a compositional bias: polar residues; that stretch reads SLVNGNHTPQTATR. Phosphoserine is present on residues S192, S220, and S223. 2 disordered regions span residues 211–334 and 370–535; these read AAGK…LTDS and GALS…GSFS. Residues 252–273 show a composition bias toward low complexity; it reads SPAFSPLSSPASSGSCASHSPS. Residues 288–303 are compositionally biased toward polar residues; it reads RSSSYHLALQPPQSRP. Residues 309-322 show a composition bias toward basic and acidic residues; that stretch reads ESPRLSRKGGHERP. Phosphoserine is present on residues S324, S334, S381, S404, S430, S443, S461, S470, S489, and S501. Over residues 456 to 473 the composition is skewed to low complexity; that stretch reads ELPPLSPSLSRRALSPLP. Basic and acidic residues predominate over residues 481–491; the sequence is KLNREVAESPR. Residue R512 is modified to Omega-N-methylarginine. 2 positions are modified to phosphoserine: S518 and S520. T522 is modified (phosphothreonine). Phosphoserine is present on residues S533, S539, S551, S555, S563, S578, and S583. The segment covering 653–663 has biased composition (low complexity); that stretch reads PSRGLAGASGR. Disordered stretches follow at residues 653 to 707, 936 to 1019, and 1119 to 1138; these read PSRG…APST, TGPA…GSLP, and SMETSISTGGNSACSPDNMS. Basic and acidic residues predominate over residues 677 to 691; it reads ESMERSDEENLKEEC. A Phosphoserine modification is found at S678. Residues 683–809 adopt a coiled-coil conformation; that stretch reads DEENLKEECS…TETKLFEDLE (127 aa). Phosphoserine is present on residues S971 and S1017. The span at 971–992 shows a compositional bias: low complexity; that stretch reads SPLPRTRSGPLPSSSGSSSSSS. Positions 1009-1018 are enriched in polar residues; it reads LLTQNGTGSL. Residues 1144–1208 are a coiled coil; the sequence is DMGKIEEMEK…ARRQQLVEKE (65 aa). Residues 1256 to 1370 form the PH domain; it reads SKVCRGYLVK…WMDVIVTGAE (115 aa).

The chain is Pleckstrin homology-like domain family B member 1 (PHLDB1) from Homo sapiens (Human).